The following is a 294-amino-acid chain: MSMIYITLNIIAYVIDVRSLILDVRRLVFSLILGIVEGLTEFLPISSTGHMILVENILNCMDDSVIAFTVIIQLGAILSITKIFWSQLYGMSMICIKKIFFKQHDDHNHLCIRHIFLGTFPGIMLGMIFYEKIGLIFELTYIMYGLIIGGIFLLVGELCASKEPRVSRINNITYLQAFLIGCFQCLAFWPGFSRAGATIGGGLVVGLDRRISSEFSFFLAVPIIFGSAVLTLYHYRSCIGLMDVLLLIAGSATAFFIALFTVRYFLKIVKNVSLIPFAIYRFLLAGGIYWGLMT.

A run of 9 helical transmembrane segments spans residues 2 to 22 (SMIY…SLIL), 27 to 47 (LVFS…PISS), 65 to 85 (VIAF…KIFW), 110 to 130 (LCIR…MIFY), 135 to 155 (LIFE…FLLV), 172 to 192 (ITYL…WPGF), 215 to 235 (FSFF…LYHY), 239 to 259 (IGLM…FIAL), and 272 to 292 (VSLI…YWGL).

The protein belongs to the UppP family.

It is found in the cell inner membrane. It carries out the reaction di-trans,octa-cis-undecaprenyl diphosphate + H2O = di-trans,octa-cis-undecaprenyl phosphate + phosphate + H(+). Functionally, catalyzes the dephosphorylation of undecaprenyl diphosphate (UPP). Confers resistance to bacitracin. In Blochmanniella pennsylvanica (strain BPEN), this protein is Undecaprenyl-diphosphatase.